The primary structure comprises 441 residues: Tubulin beta-1 chain (441 aa).

The GTP site is built by Q11, E69, S138, G142, T143, G144, N204, and N226. E69 lines the Mg(2+) pocket.

This sequence belongs to the tubulin family. Dimer of alpha and beta chains. A typical microtubule is a hollow water-filled tube with an outer diameter of 25 nm and an inner diameter of 15 nM. Alpha-beta heterodimers associate head-to-tail to form protofilaments running lengthwise along the microtubule wall with the beta-tubulin subunit facing the microtubule plus end conferring a structural polarity. Microtubules usually have 13 protofilaments but different protofilament numbers can be found in some organisms and specialized cells. Mg(2+) serves as cofactor. In terms of tissue distribution, expressed primarily in touch receptor neurons.

The protein localises to the cytoplasm. Its subcellular location is the cytoskeleton. Functionally, TTubulin is the major constituent of microtubules, a cylinder consisting of laterally associated linear protofilaments composed of alpha- and beta-tubulin heterodimers. Microtubules grow by the addition of GTP-tubulin dimers to the microtubule end, where a stabilizing cap forms. Below the cap, tubulin dimers are in GDP-bound state, owing to GTPase activity of alpha-tubulin. Plays a role in mechanosensory transduction (touch sensitivity). Mec-7 beta-tubulin is required for the production of 15-protofilament microtubules. This chain is Tubulin beta-1 chain (mec-7), found in Caenorhabditis elegans.